The following is a 287-amino-acid chain: Large ribosomal subunit protein uL2 (287 aa).

The segment at 221 to 287 (RGSVMNPCDH…SKRSRGGRDS (67 aa)) is disordered. The span at 271–287 (LRKRRKTSKRSRGGRDS) shows a compositional bias: basic residues.

This sequence belongs to the universal ribosomal protein uL2 family. As to quaternary structure, part of the 50S ribosomal subunit. Forms a bridge to the 30S subunit in the 70S ribosome.

One of the primary rRNA binding proteins. Required for association of the 30S and 50S subunits to form the 70S ribosome, for tRNA binding and peptide bond formation. It has been suggested to have peptidyltransferase activity; this is somewhat controversial. Makes several contacts with the 16S rRNA in the 70S ribosome. This Synechococcus sp. (strain CC9605) protein is Large ribosomal subunit protein uL2.